The sequence spans 98 residues: NADH-ubiquinone oxidoreductase chain 4L (98 aa).

3 consecutive transmembrane segments (helical) span residues 2-22, 29-49, and 61-81; these read PSIS…MLMF, SLLC…LIIL, and ILLL…LVTV.

This sequence belongs to the complex I subunit 4L family. As to quaternary structure, core subunit of respiratory chain NADH dehydrogenase (Complex I) which is composed of 45 different subunits.

The protein localises to the mitochondrion inner membrane. The enzyme catalyses a ubiquinone + NADH + 5 H(+)(in) = a ubiquinol + NAD(+) + 4 H(+)(out). Its function is as follows. Core subunit of the mitochondrial membrane respiratory chain NADH dehydrogenase (Complex I) which catalyzes electron transfer from NADH through the respiratory chain, using ubiquinone as an electron acceptor. Part of the enzyme membrane arm which is embedded in the lipid bilayer and involved in proton translocation. In Microcebus mamiratra (Claire's mouse lemur), this protein is NADH-ubiquinone oxidoreductase chain 4L (MT-ND4L).